The primary structure comprises 337 residues: MEKSWMLWNFVERWLIALASWSWALCRISLLPLIVTFHLYGGIILLLLIFISIAGILYKFQDVLLYFPEQPSSSRLYVPMPTGIPHENIFIRTKDGIRLNLILIRYTGDNSPYSPTIIYFHGNAGNIGHRLPNALLMLVNLKVNLLLVDYRGYGKSEGEASEEGLYLDSEAVLDYVMTRPDLDKTKIFLFGRSLGGAVAIHLASENSHRISAIMVENTFLSIPHMASTLFSFFPMRYLPLWCYKNKFLSYRKISQCRMPSLFISGLSDQLIPPVMMKQLYELSPSRTKRLAIFPDGTHNDTWQCQGYFTALEQFIKEVVKSHSPEEMAKTSSNVTII.

The helical; Signal-anchor for type II membrane protein transmembrane segment at 37 to 57 (FHLYGGIILLLLIFISIAGIL) threads the bilayer. Residues S193, D268, and H298 each act as charge relay system in the active site. N-linked (GlcNAc...) asparagine glycosylation is present at N299.

It belongs to the serine esterase family.

Its subcellular location is the membrane. The polypeptide is Protein ABHD13 (Homo sapiens (Human)).